The chain runs to 806 residues: Facilitated trehalose transporter Tret1 (806 aa).

Disordered regions lie at residues 1-34 and 48-138; these read MFGN…TTGT and LNST…HKNQ. At 1 to 339 the chain is on the cytoplasmic side; sequence MFGNEMDDTR…LEVYRPTTNP (339 aa). The span at 25-34 shows a compositional bias: low complexity; that stretch reads GSLSTSTTGT. A helical transmembrane segment spans residues 340-360; it reads IFIWTQVLAALSVSLGSMVVG. Topologically, residues 361 to 389 are extracellular; it reads FSSAYTSPALVSMKDRNITSFEVTDQSGS. N-linked (GlcNAc...) asparagine glycosylation is present at Asn377. A helical transmembrane segment spans residues 390-410; that stretch reads WVGGIMPLAGLAGGILGGPLI. The Cytoplasmic segment spans residues 411–424; that stretch reads EYLGRKNTILATAT. Residues 425–445 form a helical membrane-spanning segment; sequence PFIISWLLIACATHVAMVLVG. Topologically, residues 446-447 are extracellular; it reads RA. Residues 448-468 form a helical membrane-spanning segment; that stretch reads LSGFSVGVASLSLPVYLGETV. The Cytoplasmic portion of the chain corresponds to 469–473; that stretch reads QPEVR. Residues 474 to 494 form a helical membrane-spanning segment; that stretch reads GTLGLLPTAFGNIGILLCFVA. Over 495 to 501 the chain is Extracellular; the sequence is GKYMDWS. A helical transmembrane segment spans residues 502-522; that stretch reads GLAFLGAALPIPFLLLMFLIP. The Cytoplasmic segment spans residues 523–585; that stretch reads ETPRWYVSRG…DLMKKANLKP (63 aa). Residues 586–606 traverse the membrane as a helical segment; it reads LLISLGLMFFQQLSGINAVIF. At 607–622 the chain is on the extracellular side; that stretch reads YTVQIFQDAGSTIDEN. The helical transmembrane segment at 623–643 threads the bilayer; sequence LCTIIVGVVNFIATFIATMLI. Residues 644–649 are Cytoplasmic-facing; it reads DRLGRK. A helical membrane pass occupies residues 650-670; it reads MLLYISDVAMIITLMTLGGFF. Topologically, residues 671–681 are extracellular; the sequence is YVKNSGQDVSQ. The helical transmembrane segment at 682–702 threads the bilayer; sequence VGWLPLAAFVIYVLGFSLGFG. Residues 703–723 are Cytoplasmic-facing; that stretch reads PIPWLMMGEILPGKIRGSAAS. The chain crosses the membrane as a helical span at residues 724–744; sequence VATAFNWSCTFIVTKTFADII. At 745-750 the chain is on the extracellular side; it reads NAIGTH. The chain crosses the membrane as a helical span at residues 751–771; sequence GTFWMFGSICVIGLAFVIFYV. The Cytoplasmic portion of the chain corresponds to 772–806; that stretch reads PETQGKSLEDIERKMMGRVRRMSSVANIKPLSFNM.

It belongs to the major facilitator superfamily. Sugar transporter (TC 2.A.1.1) family. Trehalose transporter subfamily.

The protein localises to the cell membrane. Functionally, high-capacity facilitative transporter for trehalose. Does not transport maltose, sucrose or lactose. Mediates the bidirectional transfer of trehalose. Responsible for the transport of trehalose synthesized in the fat body and the incorporation of trehalose into other tissues that require a carbon source, thereby regulating trehalose levels in the hemolymph. The polypeptide is Facilitated trehalose transporter Tret1 (Aedes aegypti (Yellowfever mosquito)).